Reading from the N-terminus, the 154-residue chain is Myoglobin (154 aa).

Residues Gly2–Lys148 form the Globin domain. Ser4 carries the post-translational modification Phosphoserine. His65 is a binding site for nitrite. Residue His65 participates in O2 binding. Thr68 carries the post-translational modification Phosphothreonine. His94 serves as a coordination point for heme b.

This sequence belongs to the globin family. Monomeric.

Its subcellular location is the cytoplasm. The protein localises to the sarcoplasm. It catalyses the reaction Fe(III)-heme b-[protein] + nitric oxide + H2O = Fe(II)-heme b-[protein] + nitrite + 2 H(+). It carries out the reaction H2O2 + AH2 = A + 2 H2O. Its function is as follows. Monomeric heme protein which primary function is to store oxygen and facilitate its diffusion within muscle tissues. Reversibly binds oxygen through a pentacoordinated heme iron and enables its timely and efficient release as needed during periods of heightened demand. Depending on the oxidative conditions of tissues and cells, and in addition to its ability to bind oxygen, it also has a nitrite reductase activity whereby it regulates the production of bioactive nitric oxide. Under stress conditions, like hypoxia and anoxia, it also protects cells against reactive oxygen species thanks to its pseudoperoxidase activity. The sequence is that of Myoglobin (MB) from Ziphius cavirostris (Cuvier's beaked whale).